We begin with the raw amino-acid sequence, 493 residues long: GTPase Der (493 aa).

2 consecutive EngA-type G domains span residues 3–166 and 207–380; these read PVVA…SGKG and LKLA…DCAT. Residues 9–16, 56–60, 118–121, 213–220, 260–264, and 325–328 each bind GTP; these read GRPNVGKS, DTGGI, NKTD, GKPNVGKS, DTAGV, and NKWD. A KH-like domain is found at 381–465; sequence RRVNTSLLTR…PIRIQFKEGA (85 aa).

Belongs to the TRAFAC class TrmE-Era-EngA-EngB-Septin-like GTPase superfamily. EngA (Der) GTPase family. Associates with the 50S ribosomal subunit.

Its function is as follows. GTPase that plays an essential role in the late steps of ribosome biogenesis. The sequence is that of GTPase Der from Photorhabdus laumondii subsp. laumondii (strain DSM 15139 / CIP 105565 / TT01) (Photorhabdus luminescens subsp. laumondii).